The primary structure comprises 968 residues: Catenin delta-1 (968 aa).

At Met-1 the chain carries N-acetylmethionine. Residues 1–357 (MDDSEVESTA…ASLDSLRKGG (357 aa)) form a necessary and sufficient for interaction with CCDC85B region. Position 4 is a phosphoserine (Ser-4). Residues 10 to 46 (ASILASVKEQEAQFEKLTRALEEERRHVSAQLERVRV) adopt a coiled-coil conformation. Position 47 is a phosphoserine (Ser-47). The residue at position 59 (Thr-59) is a Phosphothreonine. A Phosphotyrosine; by FYN modification is found at Tyr-112. Ser-125 bears the Phosphoserine mark. 2 positions are modified to phosphotyrosine: Tyr-217 and Tyr-221. Residue Ser-225 is modified to Phosphoserine. Residue Tyr-228 is modified to Phosphotyrosine. Ser-230 and Ser-252 each carry phosphoserine. Residue Tyr-257 is modified to Phosphotyrosine. Residues Ser-268 and Ser-269 each carry the phosphoserine modification. At Tyr-280 the chain carries Phosphotyrosine. Ser-288 bears the Phosphoserine; by PAK5 mark. Tyr-291 carries the phosphotyrosine modification. The short motif at 299–306 (MSDYGTAR) is the Nuclear localization signal (NLS) element. Phosphoserine is present on Ser-300. The residue at position 304 (Thr-304) is a Phosphothreonine. Phosphoserine is present on residues Ser-320, Ser-346, Ser-349, and Ser-352. ARM repeat units follow at residues 358-395 (PPPPNWRQPELPEVIAMLGFRLDAVKSNAAAYLQHLCY), 398-437 (DKVKTDVRKLKGIPVLVGLLDHPKKEVHLGACGALKNISF), 441-475 (QDNKIAIKNCDGVPALVRLLRKARDMDLTEVITGT), and 476-516 (LWNL…NEDC). A Glycyl lysine isopeptide (Lys-Gly) (interchain with G-Cter in SUMO2) cross-link involves residue Lys-421. Lys-517 is covalently cross-linked (Glycyl lysine isopeptide (Lys-Gly) (interchain with G-Cter in SUMO2)). A Nuclear localization signal (NLS) motif is present at residues 521 to 528 (IEWESVLT). ARM repeat units lie at residues 534-573 (LRNVSSERSEARRKLRECDGLVDALIFIVQAEIGQKDSDS), 583-624 (LRNL…AKKG), 653-693 (ARGY…NLCA), 700-739 (RYIRSALRQEKALSAIADLLTNEHERVVKAASGALRNLAV), 740-780 (DARN…SILN), and 781-826 (TINE…ALVL). Phosphothreonine is present on residues Ile-566, Asp-572, Ser-587, and Glu-593. Residues 568–575 (QKDSDSKL) carry the Nuclear localization signal (NLS) motif. A Phosphoserine modification is found at Ser-617. The Nuclear localization signal (NLS) motif lies at 622–629 (KKGKDEWF). Residue Ser-713 is modified to Phosphoserine. A phosphothreonine mark is found at Glu-788, Lys-794, and Asn-809. The residue at position 811 (Ser-811) is a Phosphoserine. A phosphothreonine mark is found at Ser-815, Leu-835, and Lys-841. At Ser-847 the chain carries Phosphoserine. Positions 855-944 (NASRSQSSHS…LMQDEGQESL (90 aa)) are disordered. Ala-856 carries the post-translational modification Phosphothreonine. Phosphoserine is present on residues Ser-857, Ser-859, and Ser-861. Ser-862 carries the phosphothreonine modification. A Phosphoserine modification is found at Ser-864. The residue at position 865 (Tyr-865) is a Phosphotyrosine. Ser-868 carries the post-translational modification Phosphoserine. Position 869 is a phosphothreonine (Thr-869). The span at 875-888 (RNQKSDKKPDREEI) shows a compositional bias: basic and acidic residues. Ser-879 bears the Phosphoserine mark. Residue Lys-882 forms a Glycyl lysine isopeptide (Lys-Gly) (interchain with G-Cter in SUMO2) linkage. Phosphothreonine occurs at positions 889 and 895. The span at 889-908 (QMSNMGSNTKSLDNNYSTPN) shows a compositional bias: polar residues. A Phosphoserine modification is found at Ser-899. Position 904 is a phosphotyrosine (Tyr-904). 3 positions are modified to phosphothreonine: Thr-906, Arg-910, and Thr-916. A compositionally biased stretch (basic and acidic residues) spans 909 to 922 (ERGDHNRTLDRSGD). Phosphoserine is present on residues Ser-920 and Ser-943.

This sequence belongs to the beta-catenin family. As to quaternary structure, belongs to a multiprotein cell-cell adhesion complex that also contains E-cadherin/CDH1, alpha-catenin/CTNNA1, beta-catenin/CTNNB1, and gamma-catenin/JUP. Component of a cadherin:catenin adhesion complex composed of at least of CDH26, beta-catenin/CTNNB1, alpha-catenin/CTNNA1 and p120 catenin/CTNND1. Binds to the C-terminal fragment of PSEN1 and mutually competes for CDH1. Interacts with ZBTB33. Interacts with GLIS2. Interacts with FER. Interacts with NANOS1 (via N-terminal region). Interacts (via N-terminus) with GNA12; the interaction regulates CDH1-mediated cell-cell adhesion. Interacts with GNA13. Interacts with CCDC85B. Interacts with PLPP3; negatively regulates the PLPP3-mediated stabilization of CTNNB1. Interacts with DSG3; the interaction facilitates DSG3 localization and retention at cell-cell junctions. Interacts with CTNND1/p120-catenin; the interaction controls CADH5 endocytosis. Post-translationally, phosphorylated by FER and other protein-tyrosine kinases. Phosphorylated at Ser-288 by PAK5. Dephosphorylated by PTPRJ. Expressed in vascular endothelium. Melanocytes and melanoma cells primarily express the long isoform 1A, whereas keratinocytes express shorter isoforms, especially 3A. The shortest isoform 4A, is detected in normal keratinocytes and melanocytes, and generally lost from cells derived from squamous cell carcinomas or melanomas. The C-terminal alternatively spliced exon B is present in the p120ctn transcripts in the colon, intestine and prostate, but lost in several tumor tissues derived from these organs.

It is found in the cell junction. The protein localises to the adherens junction. It localises to the cytoplasm. The protein resides in the nucleus. Its subcellular location is the cell membrane. Key regulator of cell-cell adhesion that associates with and regulates the cell adhesion properties of both C-, E- and N-cadherins, being critical for their surface stability. Promotes localization and retention of DSG3 at cell-cell junctions, via its interaction with DSG3. Beside cell-cell adhesion, regulates gene transcription through several transcription factors including ZBTB33/Kaiso2 and GLIS2, and the activity of Rho family GTPases and downstream cytoskeletal dynamics. Implicated both in cell transformation by SRC and in ligand-induced receptor signaling through the EGF, PDGF, CSF-1 and ERBB2 receptors. This chain is Catenin delta-1, found in Homo sapiens (Human).